The sequence spans 1021 residues: Translation initiation factor IF-2 (1021 aa).

Residues 50-422 are disordered; that stretch reads AFPAEGGSAS…RMGAMVPRGN (373 aa). A compositionally biased stretch (gly residues) spans 57–71; that stretch reads SASGGRPGGRPGPGN. The segment covering 75–95 has biased composition (pro residues); the sequence is PAPPRPGLAPRPGPRPVPGRP. A compositionally biased stretch (low complexity) spans 96–112; sequence GPAARPGGPAAPSAPAA. Residues 113-129 are compositionally biased toward pro residues; sequence PSAPAPGAPAASPPASQ. Low complexity-rich tracts occupy residues 130 to 159, 167 to 178, and 187 to 196; these read PRPIAASAAAPPPAATSIPPVSSPAAASGP, GGPAAPGRARPG, and SAPSAPSAGG. A compositionally biased stretch (pro residues) spans 198–208; that stretch reads RPGPRPGPRPS. Over residues 219 to 233 the composition is skewed to low complexity; that stretch reads SAGPRQSAGQSGSGP. Composition is skewed to pro residues over residues 234–254 and 262–273; these read ASPPRPGAPRPGPRPGGPRPG and RPSPGSMPPRPG. Gly residues-rich tracts occupy residues 275 to 291 and 306 to 389; these read RPGGSGGMPPRPGGSGG and GAPG…GGRG. Basic residues predominate over residues 390–401; that stretch reads RPGRQRKSKRAK. The tr-type G domain maps to 514–686; it reads IRPPVVTVMG…IILTADASLD (173 aa). Residues 523–530 form a G1 region; that stretch reads GHVDHGKT. 523–530 serves as a coordination point for GTP; that stretch reads GHVDHGKT. The segment at 548-552 is G2; the sequence is GITQH. Residues 573–576 are G3; that stretch reads DTPG. GTP is bound by residues 573 to 577 and 627 to 630; these read DTPGH and NKVD. A G4 region spans residues 627 to 630; the sequence is NKVD. A G5 region spans residues 663–665; that stretch reads SAR.

It belongs to the TRAFAC class translation factor GTPase superfamily. Classic translation factor GTPase family. IF-2 subfamily.

The protein localises to the cytoplasm. One of the essential components for the initiation of protein synthesis. Protects formylmethionyl-tRNA from spontaneous hydrolysis and promotes its binding to the 30S ribosomal subunits. Also involved in the hydrolysis of GTP during the formation of the 70S ribosomal complex. The polypeptide is Translation initiation factor IF-2 (Frankia alni (strain DSM 45986 / CECT 9034 / ACN14a)).